The following is a 249-amino-acid chain: uncharacterized protein (249 aa).

7–14 (GKGGCGKS) contributes to the ATP binding site.

This is an uncharacterized protein from Methanocaldococcus jannaschii (strain ATCC 43067 / DSM 2661 / JAL-1 / JCM 10045 / NBRC 100440) (Methanococcus jannaschii).